Here is a 354-residue protein sequence, read N- to C-terminus: Uroporphyrinogen decarboxylase (354 aa).

Residues 27-31, D77, Y154, T209, and H327 contribute to the substrate site; that span reads RQAGR.

Belongs to the uroporphyrinogen decarboxylase family. In terms of assembly, homodimer.

It is found in the cytoplasm. The enzyme catalyses uroporphyrinogen III + 4 H(+) = coproporphyrinogen III + 4 CO2. It participates in porphyrin-containing compound metabolism; protoporphyrin-IX biosynthesis; coproporphyrinogen-III from 5-aminolevulinate: step 4/4. Its function is as follows. Catalyzes the decarboxylation of four acetate groups of uroporphyrinogen-III to yield coproporphyrinogen-III. The polypeptide is Uroporphyrinogen decarboxylase (Klebsiella pneumoniae subsp. pneumoniae (strain ATCC 700721 / MGH 78578)).